We begin with the raw amino-acid sequence, 219 residues long: Ribose-5-phosphate isomerase A (219 aa).

Residues 28–31 (TGST), 81–84 (DGAD), and 94–97 (KGGG) contribute to the substrate site. The active-site Proton acceptor is Glu103. Lys121 is a substrate binding site.

This sequence belongs to the ribose 5-phosphate isomerase family. In terms of assembly, homodimer.

It catalyses the reaction aldehydo-D-ribose 5-phosphate = D-ribulose 5-phosphate. It participates in carbohydrate degradation; pentose phosphate pathway; D-ribose 5-phosphate from D-ribulose 5-phosphate (non-oxidative stage): step 1/1. Catalyzes the reversible conversion of ribose-5-phosphate to ribulose 5-phosphate. The polypeptide is Ribose-5-phosphate isomerase A (Nitrosomonas europaea (strain ATCC 19718 / CIP 103999 / KCTC 2705 / NBRC 14298)).